The following is a 133-amino-acid chain: Putative elongation factor 1-delta-like protein (133 aa).

Positions 58-73 (SLAGSLGPGASSGPSG) are enriched in low complexity. 2 disordered regions span residues 58 to 77 (SLAG…DHSE) and 89 to 133 (NQRD…TSRG). The span at 89-102 (NQRDLAERAGEELA) shows a compositional bias: basic and acidic residues.

Belongs to the EF-1-beta/EF-1-delta family.

The chain is Putative elongation factor 1-delta-like protein (EEF1DP3) from Homo sapiens (Human).